We begin with the raw amino-acid sequence, 1388 residues long: MKRGFARPTPEKAPVIKPENIVLPTPLSIPPPEGKPWWLIVVGVVVVGLLGGMVAMVFASGSHVFGGVGSIFPIFMMVGIMMMMFRSVGAGGQQQMSRPKLDAMRAQFMLMLDMLRETAQESADSMDSNYRWFHPAPSTLAAAVGSPRMWERKPDGKDLNFGVVRVGVGMTRPEVTWGEPQNMPTDIELEPVTGKALQEFGRYQSVVYNLPKMISLLVEPWYALVGEREQALGLMRAIICQLTFSHGPDHVQFIVVSSDLAEWEWVKWLPHFGDSRRYDAAGNARMVYSSVREFAAEQGELFAGRGSFTPRHASSSAQTPTPHTVIICDVDDPQWEYVISAEGVDGVTFFDLTGSPMWTNVPERKLEFDKTGVIEALPRDRDTWMVIDDNAWFFALTDHVSIAEAEEFGQKLAQWRLAEAYEEIGQRVAHIGARDILAYYGIDDPGNIDFDYLWGSRTDSMGRSRLRAPFGNRSDNGELLFLDMKSLDEGGDGPHGVMSGTTGSGKSTLVRTVIESLMLGHPPEELQFVLADLKGGSAVKPFAGVPHVSRIITDLEEDQALMERFLDALWGEIARRKAICDSAGVDDAKEYNSVRGRMRARGQDMAPLPMLVVVIDEFYEWFRIMPTAVDVLDSIGRQGRAYWIHLMMASQTIESRAEKLMENMGYRLVLKARTAGAAQAAGVPNAVNLPAQAGLGYFRKSLEDIIRFQAEFLWRDYFQPGITVDGEEAPVLVHSIDYIRPQLFTNSFTPLEVTVGGPEIDKVVAHANGEVVEEVEAEAEEEGIRVPKVGTVIIDQLRRINFEPYRLWQPPLTQPVAIDDLVNRFLGHPWQKEYGSARNLVFPIGVIDRPFKHDQPPWTVDTSGPGSNVLILGAGGSGKTTALQTLISSAALTHTPDQVQFYCLAYSSTALTTVSKLPHVGEVAGPTDPYGVRRTVAELLALVRERKRSFLEYGIASMEMFRRRKFGGEAGPVPNDGFGDVYLVIDNYRALAEENEVLIEQVNLIINQGPSFGVHVVVTADRESELRPPVRSGFGSRVELRLAAVEDAKLVRSRFAKDVPVKPGRGMVAVNYVRLDSDPQAGLHTLVARPAMGSTPTNVFECDSVVAAVSRLTTSQAPPVRRLPASFGVDQVRQLAARDTRQGVGVGGIAWAISELDLQPVYLNFAENSHLMVTGRRECGRTTTLATIMSEIGRLYAPGATSVPAPPPGQPSAQVWLIDPRRQLLTALGSNYVERFAYNLDGVQAMMGELAAVLAGREPPPGLSAEELLSRSWWSGPEIFLIVDDIQQLPPGFDSPLHKAAPWVNRAADVGLHVIVTRSFGGWSSAGSDPMLRALHQANAPLLVMDADPDEGFIRGKMKGGPLPRGRGLLMAEDTGVFVQVALTEVRK.

The next 2 helical transmembrane spans lie at 38 to 58 (WLIVVGVVVVGLLGGMVAMVF) and 65 to 85 (FGGVGSIFPIFMMVGIMMMMF). FtsK domains are found at residues 477 to 679 (GELL…GAAQ), 855 to 1049 (QPPW…EDAK), and 1158 to 1351 (LQPV…DPDE). ATP contacts are provided by residues 500 to 507 (GTTGSGKS), 873 to 880 (GAGGSGKT), and 1175 to 1182 (GRRECGRT).

Part of the ESX-5 / type VII secretion system (T7SS), which is composed of cytosolic and membrane components. The ESX-5 membrane complex is composed of EccB5, EccC5, EccD5 and EccE5.

The protein localises to the cell inner membrane. In terms of biological role, part of the ESX-5 specialized secretion system, which is responsible for the secretion of EsxN and a number of PE_PGRS and PPE proteins. This component is essential for ESX-5 complex stability and secretion. This is ESX-5 secretion system protein EccC5 from Mycobacterium marinum (strain ATCC BAA-535 / M).